The sequence spans 3092 residues: Probable polyketide synthase 45 (3092 aa).

One can recognise a Ketosynthase family 3 (KS3) domain in the interval 10–430; sequence DNDVAIIGIG…GSNVCLILTE (421 aa). Residues cysteine 170, histidine 315, and histidine 353 each act as for beta-ketoacyl synthase activity in the active site. The interval 640-673 is acyl/malonyl transferase; that stretch reads GILASISIGHSLGEVSSAVCSGMIDLETGCFIIY. The active-site For acyl/malonyl transferase activity is serine 650. The N-terminal hotdog fold stretch occupies residues 967-1087; sequence INQLGNRNER…GKFSITKHND (121 aa). Positions 967-1254 constitute a PKS/mFAS DH domain; the sequence is INQLGNRNER…YTQLTPYKNQ (288 aa). Histidine 999 (proton acceptor; for dehydratase activity) is an active-site residue. The segment at 1103 to 1254 is C-terminal hotdog fold; it reads NFVTIQKKEL…YTQLTPYKNQ (152 aa). Aspartate 1165 acts as the Proton donor; for dehydratase activity in catalysis. One can recognise a Carrier domain in the interval 2566–2644; sequence SDDLSIREEI…QLIQSVTDAM (79 aa). Position 2604 is an O-(pantetheine 4'-phosphoryl)serine (serine 2604). The chain crosses the membrane as a helical span at residues 2705–2725; that stretch reads NTVFLTGSSGFIGIYILFYLI.

Pantetheine 4'-phosphate is required as a cofactor.

It is found in the membrane. Functionally, probable polyketide synthase. The polypeptide is Probable polyketide synthase 45 (pks45) (Dictyostelium discoideum (Social amoeba)).